The following is a 630-amino-acid chain: Chaperone protein HtpG (630 aa).

The interval 1–339 (MKGQETRGFQ…SNDLPLNVSR (339 aa)) is a; substrate-binding. The interval 340–555 (EILQDNSITR…VDEMSTQMAK (216 aa)) is b. The c stretch occupies residues 556-630 (LFAAAGQQVP…MNQLLLSEKA (75 aa)).

It belongs to the heat shock protein 90 family. As to quaternary structure, homodimer.

The protein resides in the cytoplasm. Its function is as follows. Molecular chaperone. Has ATPase activity. This chain is Chaperone protein HtpG, found in Photorhabdus laumondii subsp. laumondii (strain DSM 15139 / CIP 105565 / TT01) (Photorhabdus luminescens subsp. laumondii).